The following is a 426-amino-acid chain: Glutamyl-tRNA reductase (426 aa).

Residues 49 to 52 (TCNR), Ser-109, 114 to 116 (EGQ), and Gln-120 contribute to the substrate site. Residue Cys-50 is the Nucleophile of the active site. 189–194 (GAGETG) serves as a coordination point for NADP(+).

It belongs to the glutamyl-tRNA reductase family. Homodimer.

The enzyme catalyses (S)-4-amino-5-oxopentanoate + tRNA(Glu) + NADP(+) = L-glutamyl-tRNA(Glu) + NADPH + H(+). It participates in porphyrin-containing compound metabolism; protoporphyrin-IX biosynthesis; 5-aminolevulinate from L-glutamyl-tRNA(Glu): step 1/2. Its pathway is porphyrin-containing compound metabolism; chlorophyll biosynthesis. In terms of biological role, catalyzes the NADPH-dependent reduction of glutamyl-tRNA(Glu) to glutamate 1-semialdehyde (GSA). The sequence is that of Glutamyl-tRNA reductase from Prosthecochloris aestuarii (strain DSM 271 / SK 413).